The sequence spans 171 residues: Shikimate kinase (171 aa).

An ATP-binding site is contributed by 14–19 (GAGKST). Mg(2+) is bound at residue serine 18. Substrate is bound by residues aspartate 36, arginine 60, and glycine 82. Arginine 120 serves as a coordination point for ATP. Arginine 139 lines the substrate pocket. Residue glutamine 156 coordinates ATP.

Belongs to the shikimate kinase family. Monomer. Mg(2+) serves as cofactor.

The protein resides in the cytoplasm. The enzyme catalyses shikimate + ATP = 3-phosphoshikimate + ADP + H(+). The protein operates within metabolic intermediate biosynthesis; chorismate biosynthesis; chorismate from D-erythrose 4-phosphate and phosphoenolpyruvate: step 5/7. Catalyzes the specific phosphorylation of the 3-hydroxyl group of shikimic acid using ATP as a cosubstrate. The protein is Shikimate kinase of Shewanella baltica (strain OS195).